Here is a 49-residue protein sequence, read N- to C-terminus: Lysozyme C (49 aa).

Residues 1-49 (SKMKKCEFAKIAKEQHMDGYHGVSLADWVCLVNNESDFNTKAINRNKGI) form the C-type lysozyme domain. Residue E35 is part of the active site.

It belongs to the glycosyl hydrolase 22 family. As to quaternary structure, monomer.

It localises to the secreted. The enzyme catalyses Hydrolysis of (1-&gt;4)-beta-linkages between N-acetylmuramic acid and N-acetyl-D-glucosamine residues in a peptidoglycan and between N-acetyl-D-glucosamine residues in chitodextrins.. Functionally, lysozymes have primarily a bacteriolytic function; those in tissues and body fluids are associated with the monocyte-macrophage system and enhance the activity of immunoagents. This is Lysozyme C (LYZ) from Pseudocheirus peregrinus (Common ring-tailed possum).